Consider the following 267-residue polypeptide: NAD kinase (267 aa).

Aspartate 45 acts as the Proton acceptor in catalysis. Residues 45 to 46 (DG), 121 to 122 (NE), lysine 147, aspartate 149, 160 to 165 (TAYSKS), and alanine 184 contribute to the NAD(+) site.

The protein belongs to the NAD kinase family. It depends on a divalent metal cation as a cofactor.

The protein localises to the cytoplasm. It catalyses the reaction NAD(+) + ATP = ADP + NADP(+) + H(+). Functionally, involved in the regulation of the intracellular balance of NAD and NADP, and is a key enzyme in the biosynthesis of NADP. Catalyzes specifically the phosphorylation on 2'-hydroxyl of the adenosine moiety of NAD to yield NADP. This is NAD kinase from Lactobacillus gasseri (strain ATCC 33323 / DSM 20243 / BCRC 14619 / CIP 102991 / JCM 1131 / KCTC 3163 / NCIMB 11718 / NCTC 13722 / AM63).